The chain runs to 1024 residues: Beta-galactosidase (1024 aa).

Asn103 and Asp202 together coordinate substrate. Asp202 is a Na(+) binding site. Residues Glu417, His419, and Glu462 each coordinate Mg(2+). Substrate-binding positions include Glu462 and Glu538–His541. The active-site Proton donor is the Glu462. The active-site Nucleophile is the Glu538. Residue Asn598 participates in Mg(2+) binding. Residues Phe602 and Asn605 each contribute to the Na(+) site. Substrate-binding residues include Asn605 and Trp1000.

This sequence belongs to the glycosyl hydrolase 2 family. As to quaternary structure, homotetramer. Mg(2+) serves as cofactor. The cofactor is Na(+).

It catalyses the reaction Hydrolysis of terminal non-reducing beta-D-galactose residues in beta-D-galactosides.. This is Beta-galactosidase from Shigella dysenteriae serotype 1 (strain Sd197).